Consider the following 150-residue polypeptide: Detocs response regulatory protein DtcB (150 aa).

A Response regulatory domain is found at 2–150; it reads KILIADDNIQ…TDLIKKITEL (149 aa). Position 54 is a 4-aspartylphosphate (D54).

Probably phosphorylated by DtcA.

Possible phosphate scavenger member of the two-component regulatory system Detocs that confers resistance to bacteriophage. When the system (DtcA-DtcB-DtcC) is expressed in a susceptible E.coli (strain MG1655) it confers resistance to bacteriophages T2, T4, T5, T7, SECphi4, SECphi6 and SECphi27; the level of resistance varies, resistance to T2, T7 and SECphi4 is not very high. DtcA probably autophosphorylates upon sensing viral infection, and subsequently transfers the phosphate signal to DtcC which activates it, leading to an antiviral defense; DtcB (this subunit) may scavenge phosphorylation signals from accidental activation of DtcA. This chain is Detocs response regulatory protein DtcB, found in Enterobacter cloacae (strain JD6301).